Reading from the N-terminus, the 532-residue chain is MSDIFSHTALSNLAEFSVSELSGSIKRTVETAFEQVRVRGEISGYRGPHSSGHAYFSLKDDRARIDAVIWKGTFSRLKFRPEEGMEVIATGKITTFPGSSKYQIVIESLEPAGAGALMALLEDRRRRLAAEGLFDSARKRPLPFMPRVIGVVTSPTGAVIRDILHRISDRFPVHVVVWPVKVQGEGSGEEVANAIRGFNALKPGGDIARPDVLIVARGGGSLEDLWSFNDEIVVRAAAESEIPLISAVGHETDTTLIDYAADVRAPTPTGAAEMAVPVRAELEAQLSGLAARLSGSVSRQMDNRRQGVRALVRALPSLDQLLALPRRRFDEAASGLGRGLELTTLNKRRAFERSASGLRPETLLNGLKHHRQRITERMHRAETLVERRLLQGKGRVDSFDSALRSLPARLLGQLERQKERVVTAARRADTAVLHRMAQNRSGLAAHDRILQSLSYKNVLNRGYAVIRDEENRPLTRAAAIASGAAVSMEFADGRVSAITTGEGTPAPETAAAPKKKPAKPASSDPGNQGNLF.

The disordered stretch occupies residues 497 to 532 (AITTGEGTPAPETAAAPKKKPAKPASSDPGNQGNLF). Low complexity predominate over residues 499-512 (TTGEGTPAPETAAA).

It belongs to the XseA family. In terms of assembly, heterooligomer composed of large and small subunits.

The protein localises to the cytoplasm. It carries out the reaction Exonucleolytic cleavage in either 5'- to 3'- or 3'- to 5'-direction to yield nucleoside 5'-phosphates.. Bidirectionally degrades single-stranded DNA into large acid-insoluble oligonucleotides, which are then degraded further into small acid-soluble oligonucleotides. The protein is Exodeoxyribonuclease 7 large subunit of Agrobacterium fabrum (strain C58 / ATCC 33970) (Agrobacterium tumefaciens (strain C58)).